We begin with the raw amino-acid sequence, 79 residues long: MAHKQIYYSDKYFDEHYEYRHVMLPRELSKQVPKTHLMSEEEWRRLGVQQSLGWVHYMIHEPEPHILLFRRPLPKDQQK.

Lys4 is modified (N6-acetyllysine).

The protein belongs to the CKS family. In terms of assembly, forms a homohexamer that can probably bind six kinase subunits.

Its function is as follows. Binds to the catalytic subunit of the cyclin dependent kinases and is essential for their biological function. This is Cyclin-dependent kinases regulatory subunit 2 (CKS2) from Bos taurus (Bovine).